The sequence spans 402 residues: Diaminopimelate decarboxylase (402 aa).

K61 carries the post-translational modification N6-(pyridoxal phosphate)lysine. Residues G233 and 269 to 272 contribute to the pyridoxal 5'-phosphate site; that span reads EPGR. 5 residues coordinate substrate: R272, R304, Y308, E334, and Y360. Y360 lines the pyridoxal 5'-phosphate pocket.

This sequence belongs to the Orn/Lys/Arg decarboxylase class-II family. LysA subfamily. In terms of assembly, homodimer. Requires pyridoxal 5'-phosphate as cofactor.

The catalysed reaction is meso-2,6-diaminopimelate + H(+) = L-lysine + CO2. Its pathway is amino-acid biosynthesis; L-lysine biosynthesis via DAP pathway; L-lysine from DL-2,6-diaminopimelate: step 1/1. Its function is as follows. Specifically catalyzes the decarboxylation of meso-diaminopimelate (meso-DAP) to L-lysine. In Thermoplasma acidophilum (strain ATCC 25905 / DSM 1728 / JCM 9062 / NBRC 15155 / AMRC-C165), this protein is Diaminopimelate decarboxylase.